The sequence spans 502 residues: Maturase K (502 aa).

Belongs to the intron maturase 2 family. MatK subfamily.

The protein localises to the plastid. It localises to the chloroplast. Usually encoded in the trnK tRNA gene intron. Probably assists in splicing its own and other chloroplast group II introns. This chain is Maturase K, found in Cephalotaxus fortunei (Chinese plum-yew).